The chain runs to 290 residues: Cilia- and flagella-associated protein 298-A (290 aa).

This sequence belongs to the CFAP298 family.

Its subcellular location is the cytoplasm. The protein resides in the cytoskeleton. The protein localises to the cilium basal body. Functionally, plays a role in motile cilium function, possibly by acting on outer dynein arm assembly. Seems to be important for initiation rather than maintenance of cilium motility. Required for correct positioning of the cilium at the apical cell surface, suggesting an additional role in the planar cell polarity (PCP) pathway. May suppress canonical Wnt signaling activity. This chain is Cilia- and flagella-associated protein 298-A (cfap298-a), found in Xenopus laevis (African clawed frog).